A 548-amino-acid polypeptide reads, in one-letter code: Glucose-6-phosphate isomerase (548 aa).

Glu355 functions as the Proton donor in the catalytic mechanism. Catalysis depends on residues His386 and Lys514.

Belongs to the GPI family.

The protein resides in the cytoplasm. The catalysed reaction is alpha-D-glucose 6-phosphate = beta-D-fructose 6-phosphate. Its pathway is carbohydrate biosynthesis; gluconeogenesis. The protein operates within carbohydrate degradation; glycolysis; D-glyceraldehyde 3-phosphate and glycerone phosphate from D-glucose: step 2/4. Its function is as follows. Catalyzes the reversible isomerization of glucose-6-phosphate to fructose-6-phosphate. The polypeptide is Glucose-6-phosphate isomerase (Hamiltonella defensa subsp. Acyrthosiphon pisum (strain 5AT)).